We begin with the raw amino-acid sequence, 783 residues long: Protein involved in starch initiation 1 (783 aa).

Residues 1-27 (MGFSQAIRLNLASFSSPSPCDYCLTRV) constitute a chloroplast transit peptide. 3 coiled-coil regions span residues 128–309 (LHDA…LKEE), 345–432 (LVFS…LELA), and 457–512 (LQEK…LKAL).

Interacts with PTST2; the interaction is essential for the initiation of starch granules biosynthesis in leaf chloroplasts. Interacts with SS4; the interaction is essential for the initiation of starch granules biosynthesis in leaf chloroplasts.

It localises to the plastid. Its subcellular location is the chloroplast. Functionally, required for the initiation of starch granules biosynthesis in leaf chloroplasts. Involved in determining starch granule number and size in chloroplasts. The chain is Protein involved in starch initiation 1 from Arabidopsis thaliana (Mouse-ear cress).